A 92-amino-acid chain; its full sequence is Promotilin (92 aa).

A disordered region spans residues 12 to 49; the sequence is RMQEKERNRGQKKSLGLQQRSEEVGSLDPTEAAEEEGK.

Belongs to the motilin family.

It is found in the secreted. Plays an important role in the regulation of interdigestive gastrointestinal motility and indirectly causes rhythmic contraction of duodenal and colonic smooth muscle. The chain is Promotilin (MLN) from Equus caballus (Horse).